An 885-amino-acid chain; its full sequence is DNA polymerase eta (885 aa).

Positions 18–274 (VLLVDMDCFF…LPVGKIKGLG (257 aa)) constitute a UmuC domain. Mg(2+) contacts are provided by Asp-22 and Met-23. Asp-22 and Met-23 together coordinate Mn(2+). Arg-70 contacts a 2'-deoxyribonucleoside 5'-triphosphate. Mg(2+) contacts are provided by Asp-125 and Glu-126. Mn(2+) is bound by residues Asp-125 and Glu-126. Residue Glu-126 is part of the active site. 2 disordered regions span residues 599-653 (AIEA…DLYV) and 658-677 (VPPTLTEDELKPSTSKRKFD). Over residues 608–618 (FEEDTEEETEL) the composition is skewed to acidic residues. The segment covering 628-649 (EGQSSDAGQEQDPNTLNDSTGN) has biased composition (polar residues). The UBZ3-type 1 zinc finger occupies 701 to 737 (DILPTIKCDQCGANIPDEVKSLQTHRDHHFAQELSRT). The Zn(2+) site is built by Cys-708, Cys-711, His-725, and His-729. Residues 722 to 783 (LQTHRDHHFA…YSTAPPSNSI (62 aa)) form a disordered region. Basic and acidic residues predominate over residues 739-748 (RSTEREERTQ). A compositionally biased stretch (low complexity) spans 766 to 780 (TAGSGSSSYSTAPPS). The UBZ3-type 2 zinc finger occupies 798 to 832 (SDPQMNQCPECKAFIKCVDMPEHLDYHVARNLQRE). The Zn(2+) site is built by Cys-805, Cys-808, His-820, and His-824. Residues 846–870 (NKEKISPVQPKKQSQKKLNSTISAS) are disordered.

This sequence belongs to the DNA polymerase type-Y family. In terms of assembly, interacts (via C-terminus) with nopo. Mg(2+) serves as cofactor. Requires Mn(2+) as cofactor. Ubiquitination enhanced by nopo. In terms of tissue distribution, expressed in ovaries and testes.

It localises to the nucleus. The enzyme catalyses DNA(n) + a 2'-deoxyribonucleoside 5'-triphosphate = DNA(n+1) + diphosphate. Its activity is regulated as follows. The enzyme in complex with the DNA substrate binds a third divalent metal cation. This binding is essential for catalyzing the DNA synthesis. DNA polymerase specifically involved in the DNA repair by translesion synthesis (TLS). Plays an important role in translesion synthesis, where the normal high-fidelity DNA polymerases cannot proceed and DNA synthesis stalls. Inserts one or 2 nucleotide(s) opposite the lesion. During homologous recombination (HR) repair, has a overlapping role with the error-prone translesion polymerase PolZ1/DNApol-zeta to initiate repair synthesis that is completed by end joining or another polymerase that can bind and reinitiate synthesis. Particularly important for the repair of UV-induced pyrimidine dimers and for hydroxyurea (HU)-induced DNA damage. Although inserts the correct base, may cause base transitions and transversions depending upon the context. Forms a Schiff base with 5'-deoxyribose phosphate at abasic sites, but does not have any lyase activity, preventing the release of the 5'-deoxyribose phosphate (5'-dRP) residue. This covalent trapping of the enzyme by the 5'-dRP residue inhibits its DNA synthetic activity during base excision repair, thereby avoiding high incidence of mutagenesis. This chain is DNA polymerase eta, found in Drosophila melanogaster (Fruit fly).